The sequence spans 432 residues: FAD-dependent monooxygenase pynG (432 aa).

The FAD site is built by Glu-32, Arg-103, Asp-315, and Ala-328.

Belongs to the paxM FAD-dependent monooxygenase family. It depends on FAD as a cofactor.

It participates in secondary metabolite biosynthesis. FAD-dependent monooxygenase; part of the gene cluster that mediates the biosynthesis of pyranonigrins, a family of antioxidative compounds. The first step of pyranonigrins biosynthesis is performed by the hybrid PKS-NRPS synthetase that condenses 6 malonyl-CoA units to an acetyl starter unit, to form a 1,3,5-trioxotetradecane-6,8-dienyl-ACP. The enoyl reductase (ER) domain of pynA is likely to be functional during the first two rounds of polyketide chain extension, to generate the saturated C-C bonds of the alkyl side chain. PynA subsequently forms the amide bond between the acyl chain and L-serine. Although pynA has a terminal reductase domain, it appears to require the thioesterase pynI for the release of the straight-chain intermediate from pynA via the formation of a tetramic acid pyranonigrin J. The methyltransferase pynC then coverts pyranonigrin J to pyranonigrin I via N-methylation. The FAD-dependent monooxygenase pynG catalyzes an epoxidation-mediated cyclization to form the dihydro-gamma-pyrone moiety, followed by pynD-catalyzed oxidation of the alcohol to the ketone and enolization to yield the characteristic tetramic acid-fused gamma-pyrone core of pyranonigrin H. Pyranonigrin H is substrate of pynH for dehydration-mediated exo-methylene formation from the serine side chain to produce pyranonigrin E, before the oxidase pynE reduces the exo-methylene of pyranonigrin E into a pendant methyl to form pyranonigrin G. The FAD-linked oxidoreductase pynB performs the reverse reaction and converts pyranonigrin G back to pyranonigrin E. The sequence is that of FAD-dependent monooxygenase pynG from Aspergillus niger (strain ATCC MYA-4892 / CBS 513.88 / FGSC A1513).